The sequence spans 158 residues: Cyclic pyranopterin monophosphate synthase (158 aa).

Substrate-binding positions include 74–76 (MCH) and 112–113 (ME). The active site involves Asp127.

Belongs to the MoaC family. As to quaternary structure, homohexamer; trimer of dimers.

The catalysed reaction is (8S)-3',8-cyclo-7,8-dihydroguanosine 5'-triphosphate = cyclic pyranopterin phosphate + diphosphate. It participates in cofactor biosynthesis; molybdopterin biosynthesis. Its function is as follows. Catalyzes the conversion of (8S)-3',8-cyclo-7,8-dihydroguanosine 5'-triphosphate to cyclic pyranopterin monophosphate (cPMP). In Thermoanaerobacter pseudethanolicus (strain ATCC 33223 / 39E) (Clostridium thermohydrosulfuricum), this protein is Cyclic pyranopterin monophosphate synthase.